The following is a 122-amino-acid chain: Ribonuclease P protein component (122 aa).

It belongs to the RnpA family. In terms of assembly, consists of a catalytic RNA component (M1 or rnpB) and a protein subunit.

It catalyses the reaction Endonucleolytic cleavage of RNA, removing 5'-extranucleotides from tRNA precursor.. In terms of biological role, RNaseP catalyzes the removal of the 5'-leader sequence from pre-tRNA to produce the mature 5'-terminus. It can also cleave other RNA substrates such as 4.5S RNA. The protein component plays an auxiliary but essential role in vivo by binding to the 5'-leader sequence and broadening the substrate specificity of the ribozyme. The polypeptide is Ribonuclease P protein component (Shouchella clausii (strain KSM-K16) (Alkalihalobacillus clausii)).